Reading from the N-terminus, the 304-residue chain is tRNA pseudouridine synthase B (304 aa).

Residue Asp38 is the Nucleophile of the active site.

This sequence belongs to the pseudouridine synthase TruB family. Type 1 subfamily.

The catalysed reaction is uridine(55) in tRNA = pseudouridine(55) in tRNA. In terms of biological role, responsible for synthesis of pseudouridine from uracil-55 in the psi GC loop of transfer RNAs. The protein is tRNA pseudouridine synthase B of Listeria monocytogenes serovar 1/2a (strain ATCC BAA-679 / EGD-e).